A 468-amino-acid chain; its full sequence is MGIQLTNTMTRRKEPFHTLEPGKVKMYVCGPTVYNYIHIGNARPAIVFDTLRRYLKYRGYEVTFVQNITDVDDKLIRVANQEGVTVKEVADRYTDAYNADLKSLNVSPPDIQPRVMQTIPEIIEFVQGLIEKGFAYESEGDVYFRTGRFQEYGKLSHQPLDDLQAGARVEINEKKEHPLDFVLWKAAKTGEVTWDSPWGEGRPGWHIECSAMALKFLGEEIDIHAGGTDLVFPHHENEIAQSECFTGKVFARYWLHNGMLNIDNEKMSKSLGNFLLARDLSEKFGGQLIRFFMLQGHYRNPINFSEELIEQAANGLDRITTAYTNLSHRLDTARAEEPNDQAQEQARIIGELRERFIAEMDDDINTANAITVIFDVVKEANLYLRHQNVGETEVRAYMDLLVELTEVLGLDIAEEQELLDSEIDALIEERTEARKARNFARSDEIRDLLAAKGIVLEDTPQGVRWRRK.

Zn(2+) is bound at residue cysteine 29. A 'HIGH' region motif is present at residues 31 to 41 (PTVYNYIHIGN). Residues cysteine 209, histidine 234, and glutamate 238 each contribute to the Zn(2+) site. A 'KMSKS' region motif is present at residues 266–270 (KMSKS). Lysine 269 provides a ligand contact to ATP.

The protein belongs to the class-I aminoacyl-tRNA synthetase family. In terms of assembly, monomer. Requires Zn(2+) as cofactor.

The protein resides in the cytoplasm. The enzyme catalyses tRNA(Cys) + L-cysteine + ATP = L-cysteinyl-tRNA(Cys) + AMP + diphosphate. This chain is Cysteine--tRNA ligase, found in Brevibacillus brevis (strain 47 / JCM 6285 / NBRC 100599).